Consider the following 876-residue polypeptide: Radial spoke head 10 homolog B (876 aa).

Composition is skewed to basic and acidic residues over residues 1–16 (MVKEKKKADKKGDKSA) and 57–66 (PKRDSEHTYQ). The disordered stretch occupies residues 1-72 (MVKEKKKADK…HTYQSEDETQ (72 aa)). MORN repeat units lie at residues 86 to 108 (YEGEKVRGLYEGEGFAVFQGGNT), 109 to 131 (YHGMFSEGLMHGQGTYIWADGLK), 132 to 154 (YEGDFVKNIPMNHGVYTWPDGST), 155 to 177 (YEGEVVNGMRNGFGMFKCGTQPV), 179 to 201 (YIGHWCHGKRHGKGSIYYNQEGT), 204 to 226 (YEGDWVYNIKKGWGIRCYKSGNI), 227 to 249 (YEGQWENNMRHGEGRMRWLTTNE), 251 to 273 (YTGHWEKGIQNGFGTHTWFLKRI), 284 to 306 (YIGAFVNGFRHGQGKFYYASGAM), and 307 to 329 (YEGEWVSNKKQGRGRITFKNGRV). Disordered stretches follow at residues 360–386 (SQRSRQARGSSVSADREPETLRKLDGS) and 841–876 (EPPEVPAVQPLTPSPPKEDLVSMQTSKASPGKKKKK). A compositionally biased stretch (basic and acidic residues) spans 373-386 (ADREPETLRKLDGS). Residues 752–841 (EKYEKSKDEQ…FELDITVLKE (90 aa)) are a coiled coil.

As to quaternary structure, interacts with RSPH6A. Does not appear to be part of the axonemal radial spoke complexes 1 or 2.

Its subcellular location is the cytoplasm. It localises to the cytoskeleton. It is found in the cilium axoneme. The protein resides in the cell projection. The protein localises to the cilium. Its subcellular location is the flagellum. May function as part of the axonemal radial spoke complex 3 (RS3). Radial spoke complexes are important for ciliary motility. This is Radial spoke head 10 homolog B (Rsph10b) from Rattus norvegicus (Rat).